The following is a 124-amino-acid chain: Fluoride-specific ion channel FluC (124 aa).

The next 4 membrane-spanning stretches (helical) occupy residues 1–21 (MLNT…RYGV), 36–56 (TMII…WFVV), 70–90 (TGIL…FLLI), and 100–120 (LYVI…FAII). Residues Gly74 and Thr77 each coordinate Na(+).

It belongs to the fluoride channel Fluc/FEX (TC 1.A.43) family.

Its subcellular location is the cell inner membrane. The enzyme catalyses fluoride(in) = fluoride(out). With respect to regulation, na(+) is not transported, but it plays an essential structural role and its presence is essential for fluoride channel function. Fluoride-specific ion channel. Important for reducing fluoride concentration in the cell, thus reducing its toxicity. This Methylobacterium sp. (strain 4-46) protein is Fluoride-specific ion channel FluC.